The primary structure comprises 496 residues: Glutamyl-tRNA(Gln) amidotransferase subunit A (496 aa).

Residues Lys-75 and Ser-150 each act as charge relay system in the active site. Ser-174 acts as the Acyl-ester intermediate in catalysis.

Belongs to the amidase family. GatA subfamily. In terms of assembly, heterotrimer of A, B and C subunits.

It carries out the reaction L-glutamyl-tRNA(Gln) + L-glutamine + ATP + H2O = L-glutaminyl-tRNA(Gln) + L-glutamate + ADP + phosphate + H(+). Its function is as follows. Allows the formation of correctly charged Gln-tRNA(Gln) through the transamidation of misacylated Glu-tRNA(Gln) in organisms which lack glutaminyl-tRNA synthetase. The reaction takes place in the presence of glutamine and ATP through an activated gamma-phospho-Glu-tRNA(Gln). The sequence is that of Glutamyl-tRNA(Gln) amidotransferase subunit A from Burkholderia vietnamiensis (strain G4 / LMG 22486) (Burkholderia cepacia (strain R1808)).